We begin with the raw amino-acid sequence, 317 residues long: Protein CbxX, plasmid (317 aa).

Gly85 to Thr92 lines the ATP pocket.

Belongs to the CbxX/CfxQ family.

Its function is as follows. Seems to be necessary for the expression of RuBisCO. The sequence is that of Protein CbxX, plasmid (cbxXP) from Cupriavidus necator (strain ATCC 17699 / DSM 428 / KCTC 22496 / NCIMB 10442 / H16 / Stanier 337) (Ralstonia eutropha).